The primary structure comprises 119 residues: Large ribosomal subunit protein uL18 (119 aa).

This sequence belongs to the universal ribosomal protein uL18 family. Part of the 50S ribosomal subunit; part of the 5S rRNA/L5/L18/L25 subcomplex. Contacts the 5S and 23S rRNAs.

In terms of biological role, this is one of the proteins that bind and probably mediate the attachment of the 5S RNA into the large ribosomal subunit, where it forms part of the central protuberance. The chain is Large ribosomal subunit protein uL18 from Cupriavidus metallidurans (strain ATCC 43123 / DSM 2839 / NBRC 102507 / CH34) (Ralstonia metallidurans).